Reading from the N-terminus, the 144-residue chain is Maximins 1/H12 (144 aa).

An N-terminal signal peptide occupies residues 1-18; the sequence is MNFKYIVAVSFLIASAYA. Residues 19–43 constitute a propeptide that is removed on maturation; that stretch reads RSEENDEQSLSQRDVLEEESLREIR. N70 carries the post-translational modification Asparagine amide. Positions 74–123 are excised as a propeptide; the sequence is TAEEHEVMKRLEVVMRDLDSLDYPEEASERETRDFNQEEIANLYTKKEKR. The residue at position 143 (I143) is an Isoleucine amide.

The protein belongs to the bombinin family. Expressed by the skin glands.

It localises to the secreted. Functionally, maximin-1 shows antibacterial activity against both Gram-positive and Gram-negative bacteria. It also shows antimicrobial activity against the fungus C.albicans, but not against A.flavus nor P.uticale. It has little hemolytic activity. It possess a significant cytotoxicity against tumor cell lines. It does not possess a significant anti-HIV activity. It shows high spermicidal activity. Maximin-H12 shows antimicrobial activity against bacteria and against the fungus C.albicans. Shows strong hemolytic activity. This Bombina maxima (Giant fire-bellied toad) protein is Maximins 1/H12.